Here is a 432-residue protein sequence, read N- to C-terminus: Acyl-coenzyme A thioesterase 3 (432 aa).

Active-site charge relay system residues include S243, D337, and H371. The Microbody targeting signal motif lies at 430–432; that stretch reads AKL.

This sequence belongs to the C/M/P thioester hydrolase family. Widely expressed. Highly expressed in the kidney, expressed at low level in the liver. Isoform 2 is expressed in the kidney, but not in the liver. Isoform 1 is liver-specific. Highly expressed in kidney (at protein level).

It is found in the peroxisome. The enzyme catalyses hexadecanoyl-CoA + H2O = hexadecanoate + CoA + H(+). It catalyses the reaction decanoyl-CoA + H2O = decanoate + CoA + H(+). It carries out the reaction dodecanoyl-CoA + H2O = dodecanoate + CoA + H(+). The catalysed reaction is tetradecanoyl-CoA + H2O = tetradecanoate + CoA + H(+). The enzyme catalyses octadecanoyl-CoA + H2O = octadecanoate + CoA + H(+). It catalyses the reaction eicosanoyl-CoA + H2O = eicosanoate + CoA + H(+). It carries out the reaction (9Z)-octadecenoyl-CoA + H2O = (9Z)-octadecenoate + CoA + H(+). The catalysed reaction is (9Z,12Z)-octadecadienoyl-CoA + H2O = (9Z,12Z)-octadecadienoate + CoA + H(+). The enzyme catalyses (5Z,8Z,11Z,14Z)-eicosatetraenoyl-CoA + H2O = (5Z,8Z,11Z,14Z)-eicosatetraenoate + CoA + H(+). It catalyses the reaction tetracosanoyl-CoA + H2O = tetracosanoate + CoA + H(+). It carries out the reaction hexacosanoyl-CoA + H2O = hexacosanoate + CoA + H(+). The catalysed reaction is docosanoyl-CoA + H2O = docosanoate + CoA + H(+). The enzyme catalyses (9Z)-hexadecenoyl-CoA + H2O = (9Z)-hexadecenoate + CoA + H(+). It functions in the pathway lipid metabolism; fatty acid metabolism. Functionally, catalyzes the hydrolysis of acyl-CoAs into free fatty acids and coenzyme A (CoASH), regulating their respective intracellular levels. Mainly active on long-chain acyl-CoAs. May have a function in termination of beta-oxidation of fatty acids. The chain is Acyl-coenzyme A thioesterase 3 (Acot3) from Mus musculus (Mouse).